The following is a 500-amino-acid chain: Trehalose-6-phosphate synthase (500 aa).

Arginine 28 contacts D-glucose 6-phosphate. UDP-alpha-D-glucose is bound at residue 48–49 (GG). D-glucose 6-phosphate is bound by residues tyrosine 108 and aspartate 162. UDP-alpha-D-glucose is bound by residues arginine 304 and lysine 309. Arginine 342 is a binding site for D-glucose 6-phosphate. A UDP-alpha-D-glucose-binding site is contributed by 407–411 (LVAKE).

The protein belongs to the glycosyltransferase 20 family. Homotetramer.

The catalysed reaction is ADP-alpha-D-glucose + D-glucose 6-phosphate = alpha,alpha-trehalose 6-phosphate + ADP + H(+). The enzyme catalyses CDP-alpha-D-glucose + D-glucose 6-phosphate = alpha,alpha-trehalose 6-phosphate + CDP + H(+). It catalyses the reaction GDP-alpha-D-glucose + D-glucose 6-phosphate = alpha,alpha-trehalose 6-phosphate + GDP + H(+). It carries out the reaction TDP-alpha-D-glucose + D-glucose 6-phosphate = 5-methyl-UDP + alpha,alpha-trehalose 6-phosphate + H(+). The catalysed reaction is D-glucose 6-phosphate + UDP-alpha-D-glucose = alpha,alpha-trehalose 6-phosphate + UDP + H(+). It functions in the pathway glycan biosynthesis; trehalose biosynthesis. Probably involved in the osmoprotection via the biosynthesis of trehalose and in the production of glycogen and alpha-glucan via the TreS-Pep2 branch involved in the biosynthesis of maltose-1-phosphate (M1P). Catalyzes the transfer of glucose from UDP-glucose (UDP-Glc) to D-glucose 6-phosphate (Glc-6-P) to form trehalose-6-phosphate. Probably also able to use ADP-Glc, CDP-Glc, GDP-Glc and TDP-Glc as glucosyl donors. In Mycobacterium tuberculosis (strain CDC 1551 / Oshkosh), this protein is Trehalose-6-phosphate synthase.